We begin with the raw amino-acid sequence, 314 residues long: 4-hydroxy-3-methylbut-2-enyl diphosphate reductase (314 aa).

Residue cysteine 12 participates in [4Fe-4S] cluster binding. Histidine 41 and histidine 74 together coordinate (2E)-4-hydroxy-3-methylbut-2-enyl diphosphate. 2 residues coordinate dimethylallyl diphosphate: histidine 41 and histidine 74. Residues histidine 41 and histidine 74 each contribute to the isopentenyl diphosphate site. A [4Fe-4S] cluster-binding site is contributed by cysteine 96. A (2E)-4-hydroxy-3-methylbut-2-enyl diphosphate-binding site is contributed by histidine 124. Histidine 124 contacts dimethylallyl diphosphate. Histidine 124 is a binding site for isopentenyl diphosphate. The active-site Proton donor is the glutamate 126. Threonine 167 lines the (2E)-4-hydroxy-3-methylbut-2-enyl diphosphate pocket. Cysteine 197 contributes to the [4Fe-4S] cluster binding site. Residues serine 225, serine 226, asparagine 227, and serine 269 each coordinate (2E)-4-hydroxy-3-methylbut-2-enyl diphosphate. Dimethylallyl diphosphate is bound by residues serine 225, serine 226, asparagine 227, and serine 269. Positions 225, 226, 227, and 269 each coordinate isopentenyl diphosphate.

It belongs to the IspH family. [4Fe-4S] cluster is required as a cofactor.

The catalysed reaction is isopentenyl diphosphate + 2 oxidized [2Fe-2S]-[ferredoxin] + H2O = (2E)-4-hydroxy-3-methylbut-2-enyl diphosphate + 2 reduced [2Fe-2S]-[ferredoxin] + 2 H(+). It catalyses the reaction dimethylallyl diphosphate + 2 oxidized [2Fe-2S]-[ferredoxin] + H2O = (2E)-4-hydroxy-3-methylbut-2-enyl diphosphate + 2 reduced [2Fe-2S]-[ferredoxin] + 2 H(+). It functions in the pathway isoprenoid biosynthesis; dimethylallyl diphosphate biosynthesis; dimethylallyl diphosphate from (2E)-4-hydroxy-3-methylbutenyl diphosphate: step 1/1. The protein operates within isoprenoid biosynthesis; isopentenyl diphosphate biosynthesis via DXP pathway; isopentenyl diphosphate from 1-deoxy-D-xylulose 5-phosphate: step 6/6. Functionally, catalyzes the conversion of 1-hydroxy-2-methyl-2-(E)-butenyl 4-diphosphate (HMBPP) into a mixture of isopentenyl diphosphate (IPP) and dimethylallyl diphosphate (DMAPP). Acts in the terminal step of the DOXP/MEP pathway for isoprenoid precursor biosynthesis. The sequence is that of 4-hydroxy-3-methylbut-2-enyl diphosphate reductase from Aliivibrio salmonicida (strain LFI1238) (Vibrio salmonicida (strain LFI1238)).